A 393-amino-acid polypeptide reads, in one-letter code: Short-chain dehydrogenase/reductase family 42E member 1 (393 aa).

The active-site Proton acceptor is the Tyr152. Lys156 contributes to the NAD(+) binding site. Transmembrane regions (helical) follow at residues 282 to 302 (LPLT…FILG) and 371 to 391 (GLLV…SVIL).

It belongs to the 3-beta-HSD family.

Its subcellular location is the membrane. In Homo sapiens (Human), this protein is Short-chain dehydrogenase/reductase family 42E member 1 (SDR42E1).